Here is a 1187-residue protein sequence, read N- to C-terminus: Nicotinate dehydrogenase subunit B (1187 aa).

A helical transmembrane segment spans residues 764-784 (WWFGSLAGVFGAALGMLATAL). Cytochrome c domains follow at residues 804 to 907 (AMLE…MSQT), 949 to 1057 (AQWN…SSLE), and 1075 to 1163 (VSLS…RHRF). Heme c contacts are provided by Cys-818, Cys-821, His-822, Cys-964, Cys-967, His-968, Cys-1088, Cys-1091, and His-1092.

The cofactor is Mo-molybdopterin cytosine dinucleotide.

The protein resides in the membrane. The enzyme catalyses 2 Fe(III)-[cytochrome] + nicotinate + H2O = 2 Fe(II)-[cytochrome] + 6-hydroxynicotinate + 2 H(+). It functions in the pathway cofactor degradation; nicotinate degradation. Functionally, subunit of the two-component enzyme NicAB that mediates nicotinate hydroxylation, the first step in the aerobic nicotinate degradation pathway. Mediates conversion of nicotinate into 6-hydroxynicotinate (6HNA). The polypeptide is Nicotinate dehydrogenase subunit B (nicB) (Pseudomonas putida (strain ATCC 47054 / DSM 6125 / CFBP 8728 / NCIMB 11950 / KT2440)).